Reading from the N-terminus, the 342-residue chain is S-adenosylmethionine:tRNA ribosyltransferase-isomerase (342 aa).

Belongs to the QueA family. In terms of assembly, monomer.

It localises to the cytoplasm. The enzyme catalyses 7-aminomethyl-7-carbaguanosine(34) in tRNA + S-adenosyl-L-methionine = epoxyqueuosine(34) in tRNA + adenine + L-methionine + 2 H(+). Its pathway is tRNA modification; tRNA-queuosine biosynthesis. Transfers and isomerizes the ribose moiety from AdoMet to the 7-aminomethyl group of 7-deazaguanine (preQ1-tRNA) to give epoxyqueuosine (oQ-tRNA). This chain is S-adenosylmethionine:tRNA ribosyltransferase-isomerase, found in Streptococcus pyogenes serotype M2 (strain MGAS10270).